Here is a 296-residue protein sequence, read N- to C-terminus: Acetylglutamate kinase (296 aa).

Substrate contacts are provided by residues 68–69 (GG), Arg90, and Asn195.

The protein belongs to the acetylglutamate kinase family. ArgB subfamily.

The protein resides in the cytoplasm. It catalyses the reaction N-acetyl-L-glutamate + ATP = N-acetyl-L-glutamyl 5-phosphate + ADP. It participates in amino-acid biosynthesis; L-arginine biosynthesis; N(2)-acetyl-L-ornithine from L-glutamate: step 2/4. In terms of biological role, catalyzes the ATP-dependent phosphorylation of N-acetyl-L-glutamate. This Desulfotalea psychrophila (strain LSv54 / DSM 12343) protein is Acetylglutamate kinase.